Here is a 37-residue protein sequence, read N- to C-terminus: Cytochrome b6-f complex subunit 5 (37 aa).

Residues 5–25 (ILLGIVLGMVLVTLAGLFVAA) form a helical membrane-spanning segment.

It belongs to the PetG family. In terms of assembly, the 4 large subunits of the cytochrome b6-f complex are cytochrome b6, subunit IV (17 kDa polypeptide, PetD), cytochrome f and the Rieske protein, while the 4 small subunits are PetG, PetL, PetM and PetN. The complex functions as a dimer.

The protein resides in the cellular thylakoid membrane. Component of the cytochrome b6-f complex, which mediates electron transfer between photosystem II (PSII) and photosystem I (PSI), cyclic electron flow around PSI, and state transitions. PetG is required for either the stability or assembly of the cytochrome b6-f complex. The protein is Cytochrome b6-f complex subunit 5 of Synechococcus sp. (strain JA-3-3Ab) (Cyanobacteria bacterium Yellowstone A-Prime).